The sequence spans 381 residues: 40-kDa huntingtin-associated protein (381 aa).

Alanine 2 is modified (N-acetylalanine). Positions 34 to 36 match the Nuclear localization signal motif; the sequence is KKR. The segment at 213-260 is disordered; it reads EHGGHPVQQPELPQQLPSVPQPSLPGPQPRPVLGSTLPLPLPPDHAPG. Over residues 218–230 the composition is skewed to low complexity; the sequence is PVQQPELPQQLPS. Positions 231–242 are enriched in pro residues; the sequence is VPQPSLPGPQPR.

In terms of assembly, interacts with HTT (via C-terminus). Interacts with RAB5A. Found in a complex with F8A1/F8A2/F8A3, HTT and RAB5A; mediates the recruitment of HTT by RAB5A onto early endosomes.

It is found in the cytoplasm. It localises to the nucleus. The protein localises to the early endosome. The protein resides in the nuclear body. In terms of biological role, RAB5A effector molecule that is involved in vesicular trafficking of early endosomes. Mediates the recruitment of HTT by RAB5A onto early endosomes. The HTT-F8A1/F8A2/F8A3-RAB5A complex stimulates early endosomal interaction with actin filaments and inhibits interaction with microtubules, leading to the reduction of endosome motility. The protein is 40-kDa huntingtin-associated protein (F8a1) of Rattus norvegicus (Rat).